The chain runs to 273 residues: UPF0380 protein YubP (273 aa).

The protein belongs to the UPF0380 family.

This chain is UPF0380 protein YubP (yubP), found in Escherichia coli (strain K12).